The following is a 155-amino-acid chain: Ribosomal RNA large subunit methyltransferase H (155 aa).

S-adenosyl-L-methionine is bound by residues Leu73, Gly104, and Leu123 to Leu128.

The protein belongs to the RNA methyltransferase RlmH family. As to quaternary structure, homodimer.

Its subcellular location is the cytoplasm. The enzyme catalyses pseudouridine(1915) in 23S rRNA + S-adenosyl-L-methionine = N(3)-methylpseudouridine(1915) in 23S rRNA + S-adenosyl-L-homocysteine + H(+). Specifically methylates the pseudouridine at position 1915 (m3Psi1915) in 23S rRNA. This chain is Ribosomal RNA large subunit methyltransferase H, found in Coxiella burnetii (strain Dugway 5J108-111).